A 460-amino-acid chain; its full sequence is MNNIIKRFYKWPIRINEINKNNKDLIGKEIKVKGWVRNIRNQKSVSFIELGDGSSIKGLQIVGDKDSFSKLKYGSSIEVNGKLINSLGNDKEAIEVQLTEPYKLIGNCPDCYPLQPKNHSFEFLRDIAHIRSRGNSIGALLRVRNKSTQLIHQYFNDNGFINVHTPIITASDCEGGGEQFQIKSSLDTKESMFFGQPSFLTVSGQLEAEIYACSHSRVYTFGPTFRAEKSNTPRHLSEFWMIEPEMAFIDLNDNLDIAEDFCKYLIRNLLDSCKEDIEFFNKRIDTNLLSRLEKTLSTPFIRLEYKDAIQLLQNNNHPIKWGDDIQREQEKFITTHFGEIPVFVINWPKSIKPFYMRENEQTDHSNIMPTVSNMDLLVPTVGELIGGSIREERYDKLLNTINEMGMDKDQYSWYLDLRKYGTVPHGGFGLGFERFLQFVTGLQNIKDVIPIPRHQNYCKF.

The protein belongs to the class-II aminoacyl-tRNA synthetase family.

It is found in the mitochondrion matrix. The catalysed reaction is tRNA(Asn) + L-asparagine + ATP = L-asparaginyl-tRNA(Asn) + AMP + diphosphate + H(+). The sequence is that of Probable asparagine--tRNA ligase, mitochondrial (asnS2) from Dictyostelium discoideum (Social amoeba).